A 131-amino-acid chain; its full sequence is Aspartate 1-decarboxylase (131 aa).

Residue Ser-25 is the Schiff-base intermediate with substrate; via pyruvic acid of the active site. A Pyruvic acid (Ser) modification is found at Ser-25. Thr-57 provides a ligand contact to substrate. Tyr-58 functions as the Proton donor in the catalytic mechanism. 73 to 75 is a substrate binding site; the sequence is GAA.

It belongs to the PanD family. Heterooctamer of four alpha and four beta subunits. It depends on pyruvate as a cofactor. Post-translationally, is synthesized initially as an inactive proenzyme, which is activated by self-cleavage at a specific serine bond to produce a beta-subunit with a hydroxyl group at its C-terminus and an alpha-subunit with a pyruvoyl group at its N-terminus.

Its subcellular location is the cytoplasm. The catalysed reaction is L-aspartate + H(+) = beta-alanine + CO2. The protein operates within cofactor biosynthesis; (R)-pantothenate biosynthesis; beta-alanine from L-aspartate: step 1/1. Catalyzes the pyruvoyl-dependent decarboxylation of aspartate to produce beta-alanine. The sequence is that of Aspartate 1-decarboxylase from Anaeromyxobacter dehalogenans (strain 2CP-C).